We begin with the raw amino-acid sequence, 441 residues long: Serine carboxypeptidase-like 1 (441 aa).

Positions 1–29 are cleaved as a signal peptide; sequence MANKYVSSVLKSLLVLLHLVFLSKQHVDS. Cystine bridges form between Cys88/Cys331, Cys252/Cys266, and Cys290/Cys297. The N-linked (GlcNAc...) asparagine glycan is linked to Asn109. Residue Ser184 is part of the active site. Asn350 is a glycosylation site (N-linked (GlcNAc...) asparagine). Residue Asp366 is part of the active site. Asn382 carries N-linked (GlcNAc...) asparagine glycosylation. Residue His419 is part of the active site.

The protein belongs to the peptidase S10 family. Expressed in seedlings and roots.

It is found in the secreted. In terms of biological role, probable carboxypeptidase. This is Serine carboxypeptidase-like 1 (SCPL1) from Arabidopsis thaliana (Mouse-ear cress).